The following is a 149-amino-acid chain: Large ribosomal subunit protein bL9 (149 aa).

This sequence belongs to the bacterial ribosomal protein bL9 family.

In terms of biological role, binds to the 23S rRNA. This is Large ribosomal subunit protein bL9 from Thermotoga petrophila (strain ATCC BAA-488 / DSM 13995 / JCM 10881 / RKU-1).